The chain runs to 488 residues: 3-octaprenyl-4-hydroxybenzoate carboxy-lyase (488 aa).

Asparagine 172 serves as a coordination point for Mn(2+). Prenylated FMN-binding positions include 175–177 (IYR), 189–191 (RWL), and 194–195 (RG). Glutamate 238 lines the Mn(2+) pocket. Catalysis depends on aspartate 287, which acts as the Proton donor.

This sequence belongs to the UbiD family. In terms of assembly, homohexamer. The cofactor is prenylated FMN. It depends on Mn(2+) as a cofactor.

The protein localises to the cell membrane. It carries out the reaction a 4-hydroxy-3-(all-trans-polyprenyl)benzoate + H(+) = a 2-(all-trans-polyprenyl)phenol + CO2. Its pathway is cofactor biosynthesis; ubiquinone biosynthesis. Catalyzes the decarboxylation of 3-octaprenyl-4-hydroxy benzoate to 2-octaprenylphenol, an intermediate step in ubiquinone biosynthesis. The sequence is that of 3-octaprenyl-4-hydroxybenzoate carboxy-lyase from Pseudomonas fluorescens (strain SBW25).